Here is a 713-residue protein sequence, read N- to C-terminus: Polyribonucleotide nucleotidyltransferase (713 aa).

Residues aspartate 488 and aspartate 494 each contribute to the Mg(2+) site. Residues 555–614 (PQMEIIKVPTDKIRDVIGSGGKVIRGIVDETGAKVNIDDDGTVQISAMDRKSIDAAIKMI) enclose the KH domain. Residues 624–692 (GEIYEGKVVS…ERGKVRLSMK (69 aa)) form the S1 motif domain.

This sequence belongs to the polyribonucleotide nucleotidyltransferase family. It depends on Mg(2+) as a cofactor.

It localises to the cytoplasm. The enzyme catalyses RNA(n+1) + phosphate = RNA(n) + a ribonucleoside 5'-diphosphate. In terms of biological role, involved in mRNA degradation. Catalyzes the phosphorolysis of single-stranded polyribonucleotides processively in the 3'- to 5'-direction. The chain is Polyribonucleotide nucleotidyltransferase from Hyphomonas neptunium (strain ATCC 15444).